Consider the following 309-residue polypeptide: Malate dehydrogenase (309 aa).

Residues 9 to 14 (GAGFVG) and Asp33 each bind NAD(+). Residues Arg82 and Arg88 each coordinate substrate. Residues Asn95 and 118 to 120 (VNN) contribute to the NAD(+) site. Positions 120 and 151 each coordinate substrate. His175 (proton acceptor) is an active-site residue.

It belongs to the LDH/MDH superfamily. MDH type 3 family.

The catalysed reaction is (S)-malate + NAD(+) = oxaloacetate + NADH + H(+). In terms of biological role, catalyzes the reversible oxidation of malate to oxaloacetate. This is Malate dehydrogenase from Chloroflexus aggregans (strain MD-66 / DSM 9485).